The chain runs to 362 residues: UDP-N-acetylglucosamine--N-acetylmuramyl-(pentapeptide) pyrophosphoryl-undecaprenol N-acetylglucosamine transferase (362 aa).

Residues 15-17, Asn-127, Arg-165, Ser-191, Ile-247, 266-271, and Gln-292 contribute to the UDP-N-acetyl-alpha-D-glucosamine site; these read TGG and ALTVSE.

The protein belongs to the glycosyltransferase 28 family. MurG subfamily.

Its subcellular location is the cell inner membrane. The enzyme catalyses di-trans,octa-cis-undecaprenyl diphospho-N-acetyl-alpha-D-muramoyl-L-alanyl-D-glutamyl-meso-2,6-diaminopimeloyl-D-alanyl-D-alanine + UDP-N-acetyl-alpha-D-glucosamine = di-trans,octa-cis-undecaprenyl diphospho-[N-acetyl-alpha-D-glucosaminyl-(1-&gt;4)]-N-acetyl-alpha-D-muramoyl-L-alanyl-D-glutamyl-meso-2,6-diaminopimeloyl-D-alanyl-D-alanine + UDP + H(+). It functions in the pathway cell wall biogenesis; peptidoglycan biosynthesis. Functionally, cell wall formation. Catalyzes the transfer of a GlcNAc subunit on undecaprenyl-pyrophosphoryl-MurNAc-pentapeptide (lipid intermediate I) to form undecaprenyl-pyrophosphoryl-MurNAc-(pentapeptide)GlcNAc (lipid intermediate II). The polypeptide is UDP-N-acetylglucosamine--N-acetylmuramyl-(pentapeptide) pyrophosphoryl-undecaprenol N-acetylglucosamine transferase (Shewanella putrefaciens (strain CN-32 / ATCC BAA-453)).